Consider the following 623-residue polypeptide: Procollagen galactosyltransferase 1 (623 aa).

The N-terminal stretch at Met-1–Gly-30 is a signal peptide. Residues Asn-97, Asn-185, and Asn-382 are each glycosylated (N-linked (GlcNAc...) asparagine). Over residues Arg-589–Asn-607 the composition is skewed to basic and acidic residues. Residues Arg-589–Leu-623 are disordered. A Prevents secretion from ER motif is present at residues Arg-620–Leu-623.

Belongs to the glycosyltransferase 25 family. Post-translationally, N-glycosylated.

The protein resides in the endoplasmic reticulum lumen. The catalysed reaction is (5R)-5-hydroxy-L-lysyl-[collagen] + UDP-alpha-D-galactose = (5R)-5-O-(beta-D-galactosyl)-5-hydroxy-L-lysyl-[collagen] + UDP + H(+). In terms of biological role, beta-galactosyltransferase that transfers beta-galactose to hydroxylysine residues of type I collagen. By acting on collagen glycosylation, facilitates the formation of collagen triple helix. Also involved in the biosynthesis of collagen type IV. This chain is Procollagen galactosyltransferase 1 (COLGALT1), found in Bos taurus (Bovine).